Reading from the N-terminus, the 276-residue chain is Formamidopyrimidine-DNA glycosylase (276 aa).

The active-site Schiff-base intermediate with DNA is the Pro2. Residue Glu3 is the Proton donor of the active site. Lys60 (proton donor; for beta-elimination activity) is an active-site residue. Positions 93 and 112 each coordinate DNA. An FPG-type zinc finger spans residues 240–274; it reads HVYGRKQQPCHHCDTAIEKTVVGGRGTHYCPNCQP. The active-site Proton donor; for delta-elimination activity is the Arg264.

It belongs to the FPG family. In terms of assembly, monomer. It depends on Zn(2+) as a cofactor.

It catalyses the reaction Hydrolysis of DNA containing ring-opened 7-methylguanine residues, releasing 2,6-diamino-4-hydroxy-5-(N-methyl)formamidopyrimidine.. The catalysed reaction is 2'-deoxyribonucleotide-(2'-deoxyribose 5'-phosphate)-2'-deoxyribonucleotide-DNA = a 3'-end 2'-deoxyribonucleotide-(2,3-dehydro-2,3-deoxyribose 5'-phosphate)-DNA + a 5'-end 5'-phospho-2'-deoxyribonucleoside-DNA + H(+). Its function is as follows. Involved in base excision repair of DNA damaged by oxidation or by mutagenic agents. Acts as a DNA glycosylase that recognizes and removes damaged bases. Has a preference for oxidized purines, such as 7,8-dihydro-8-oxoguanine (8-oxoG). Has AP (apurinic/apyrimidinic) lyase activity and introduces nicks in the DNA strand. Cleaves the DNA backbone by beta-delta elimination to generate a single-strand break at the site of the removed base with both 3'- and 5'-phosphates. The sequence is that of Formamidopyrimidine-DNA glycosylase from Shouchella clausii (strain KSM-K16) (Alkalihalobacillus clausii).